A 210-amino-acid chain; its full sequence is Na(+)-translocating NADH-quinone reductase subunit D (210 aa).

Helical transmembrane passes span 42-62 (FVMT…VSLI), 72-92 (IIVQ…ILKA), 103-123 (VFVG…AFAM), 131-151 (FIDG…VGFF), and 178-198 (NGLM…IWAI).

The protein belongs to the NqrDE/RnfAE family. In terms of assembly, composed of six subunits; NqrA, NqrB, NqrC, NqrD, NqrE and NqrF.

It is found in the cell inner membrane. The enzyme catalyses a ubiquinone + n Na(+)(in) + NADH + H(+) = a ubiquinol + n Na(+)(out) + NAD(+). Its function is as follows. NQR complex catalyzes the reduction of ubiquinone-1 to ubiquinol by two successive reactions, coupled with the transport of Na(+) ions from the cytoplasm to the periplasm. NqrA to NqrE are probably involved in the second step, the conversion of ubisemiquinone to ubiquinol. In Vibrio cholerae serotype O1 (strain M66-2), this protein is Na(+)-translocating NADH-quinone reductase subunit D.